A 429-amino-acid polypeptide reads, in one-letter code: Alpha-L-rhamnosidase rgxB (429 aa).

Residues 1-20 (MAPIALKILLFTSLIVPSIS) form the signal peptide. Asn67, Asn77, Asn97, Asn103, Asn112, Asn135, and Asn219 each carry an N-linked (GlcNAc...) asparagine glycan. The stretch at 217–238 (SKNITLTNWEVVNGDDSISTKA) is one PbH1 1 repeat. Catalysis depends on Asp231, which acts as the Proton donor. Asn239, Asn247, Asn278, and Asn344 each carry an N-linked (GlcNAc...) asparagine glycan. PbH1 repeat units follow at residues 240-260 (STDI…AIGS) and 271-292 (VERL…YFKT). A disulfide bridge links Cys374 with Cys380. Residues Asn387, Asn395, and Asn414 are each glycosylated (N-linked (GlcNAc...) asparagine).

Belongs to the glycosyl hydrolase 28 family.

It localises to the secreted. It catalyses the reaction Hydrolysis of terminal non-reducing alpha-L-rhamnose residues in alpha-L-rhamnosides.. In terms of biological role, alpha-L-rhamnosidase which is able to degrade p-nitrophenyl-alpha-L-rhamnopyranoside (pnp_Rha). The natural substrate of this enzyme has not been identified yet. This Aspergillus niger (strain ATCC MYA-4892 / CBS 513.88 / FGSC A1513) protein is Alpha-L-rhamnosidase rgxB (rgxB).